Here is a 605-residue protein sequence, read N- to C-terminus: Poly [ADP-ribose] polymerase 2-B (605 aa).

Residues N96 to D122 are disordered. Over residues D108–D122 the composition is skewed to basic and acidic residues. The WGR domain occupies A153 to F260. Residues E250–E370 enclose the PARP alpha-helical domain. The PARP catalytic domain maps to H378–G605.

Belongs to the ARTD/PARP family.

The protein resides in the nucleus. It catalyses the reaction NAD(+) + (ADP-D-ribosyl)n-acceptor = nicotinamide + (ADP-D-ribosyl)n+1-acceptor + H(+).. The enzyme catalyses L-aspartyl-[protein] + NAD(+) = 4-O-(ADP-D-ribosyl)-L-aspartyl-[protein] + nicotinamide. It carries out the reaction L-glutamyl-[protein] + NAD(+) = 5-O-(ADP-D-ribosyl)-L-glutamyl-[protein] + nicotinamide. Its function is as follows. Involved in the base excision repair (BER) pathway, by catalyzing the poly(ADP-ribosyl)ation of a limited number of acceptor proteins involved in chromatin architecture and in DNA metabolism. This modification follows DNA damages and appears as an obligatory step in a detection/signaling pathway leading to the reparation of DNA strand breaks. The polypeptide is Poly [ADP-ribose] polymerase 2-B (PARP2-B) (Oryza sativa subsp. japonica (Rice)).